The sequence spans 828 residues: BEN domain-containing protein 3 (828 aa).

K20 is covalently cross-linked (Glycyl lysine isopeptide (Lys-Gly) (interchain with G-Cter in SUMO); alternate). Residue K20 forms a Glycyl lysine isopeptide (Lys-Gly) (interchain with G-Cter in SUMO1); alternate linkage. Residue K20 forms a Glycyl lysine isopeptide (Lys-Gly) (interchain with G-Cter in SUMO2); alternate linkage. Residues K41, K56, K58, K73, K128, K129, K137, K142, and K158 each participate in a glycyl lysine isopeptide (Lys-Gly) (interchain with G-Cter in SUMO2) cross-link. The Nuclear localization signal signature appears at 56–58; it reads KRK. Phosphoserine is present on S164. Residues 164 to 184 are disordered; the sequence is SPSSLRLLNEPQKRDCGSTGA. K176 participates in a covalent cross-link: Glycyl lysine isopeptide (Lys-Gly) (interchain with G-Cter in SUMO2). The BEN 1 domain occupies 242–343; that stretch reads PPPEYQLTAA…DFFSRFWAQR (102 aa). S379 bears the Phosphoserine mark. Residues 387-487 form the BEN 2 domain; that stretch reads ASDHVVDTQD…DELEGLGLDA (101 aa). A Glycyl lysine isopeptide (Lys-Gly) (interchain with G-Cter in SUMO2) cross-link involves residue K427. The disordered stretch occupies residues 483–504; the sequence is LGLDAGSEGDPPRDDCYDSSSL. The residue at position 489 (S489) is a Phosphoserine. K512 is covalently cross-linked (Glycyl lysine isopeptide (Lys-Gly) (interchain with G-Cter in SUMO); alternate). A Glycyl lysine isopeptide (Lys-Gly) (interchain with G-Cter in SUMO2); alternate cross-link involves residue K512. Residue K528 forms a Glycyl lysine isopeptide (Lys-Gly) (interchain with G-Cter in SUMO2) linkage. The region spanning 548-650 is the BEN 3 domain; that stretch reads VPGADCLLSK…ERCRRRDTEQ (103 aa). K700 is covalently cross-linked (Glycyl lysine isopeptide (Lys-Gly) (interchain with G-Cter in SUMO2)). One can recognise a BEN 4 domain in the interval 715-816; it reads VPSPYLLSDK…ERCRRPNRKK (102 aa).

Homooligomer, probably a homooctamer. Interacts with HDAC2 and HDAC3, but not HDAC1. Interacts with SALL4. Interacts with SMARCA5/SNF2H, BAZ2A/TIP5 and USP21. Interacts with the nucleosome remodeling and histone deacetylase (NuRD) repressor complex. Interacts (via BEN domains 1 and 3) with ERCC6L (via N-terminal TPR repeat); the interaction is direct. In terms of processing, sumoylated at Lys-20 by SUMO1 and at Lys-512 by SUMO1, SUMO2 and SUMO3. Sumoylation probably occurs sequentially, with that of Lys-20 preceding that of Lys-512. It does not alter association with heterochromatin, but is required for the repression of transcription. Expressed at least in heart, kidney, liver, ovary and spleen, with highest levels in spleen and lowest in heart. Expressed on the surface of T-cells.

It localises to the nucleus. Its subcellular location is the nucleolus. Transcriptional repressor which associates with the NoRC (nucleolar remodeling complex) complex and plays a key role in repressing rDNA transcription. The sumoylated form modulates the stability of the NoRC complex component BAZ2A/TIP5 by controlling its USP21-mediated deubiquitination. Binds to unmethylated major satellite DNA and is involved in the recruitment of the Polycomb repressive complex 2 (PRC2) to major satellites. Stimulates the ERCC6L translocase and ATPase activities. This is BEN domain-containing protein 3 (BEND3) from Homo sapiens (Human).